The following is a 479-amino-acid chain: Phosphatidylinositol 4-kinase type 2-alpha (479 aa).

The residue at position 1 (Met1) is an N-acetylmethionine. A disordered region spans residues 1–58 (MDETSPLVSPERAQPPEYTFPSGSGAHFPQVPGGAVRVAAAAGSGPSPPCSPGHDRER). Phosphoserine is present on residues Ser5, Ser9, Ser44, Ser47, and Ser51. The segment covering 31-45 (VPGGAVRVAAAAGSG) has biased composition (low complexity). The region spanning 124–453 (SIYPERIYQG…VQMPPVIVET (330 aa)) is the PI3K/PI4K catalytic domain. Residues 130–136 (IYQGSSG) are G-loop. ATP contacts are provided by residues 131–137 (YQGSSGS) and Lys152. The interval 157–159 (EPY) is important for substrate binding. Residues 165–178 (KWTKWLQKLCCPCC) form an important for interaction with membranes region. 4 S-palmitoyl cysteine lipidation sites follow: Cys174, Cys175, Cys177, and Cys178. 261–264 (QLFV) serves as a coordination point for ATP. Residues 268–276 (KDADYWLRR) form an important for interaction with membranes region. The tract at residues 305-313 (RNTDRGNDN) is catalytic loop. Residues 344–364 (AIDNGLAFPLKHPDSWRAYPF) form an activation loop region. Asp346 lines the ATP pocket. Residues 359 to 368 (WRAYPFYWAW) are important for interaction with membranes. Ser462 is subject to Phosphoserine.

Belongs to the PI3/PI4-kinase family. Type II PI4K subfamily. As to quaternary structure, associates with the BLOC-1 and the AP-3 complexes; the BLOC-1 complex is required for optimal binding of PI4K2A to the AP-3 complex. Interacts with BLOC1S5 and DTNBP1. Interacts with ITCH. Interacts with FOS; this interaction may enhance phosphatidylinositol phosphorylation activity. Interacts with ATG9A. In terms of processing, palmitoylated by ZDHHC3 and ZDHHC7 in the CCPCC motif. Palmitoylation is cholesterol-dependent, and required for TGN localization. Post-translationally, ubiquitinated by ITCH; this does not lead to proteasomal degradation. In terms of tissue distribution, detected in brain (at protein level).

The protein localises to the golgi apparatus. It localises to the trans-Golgi network membrane. Its subcellular location is the membrane raft. It is found in the endosome. The protein resides in the endosome membrane. The protein localises to the cytoplasmic vesicle. It localises to the cell projection. Its subcellular location is the dendrite. It is found in the presynaptic cell membrane. The protein resides in the synapse. The protein localises to the synaptosome. It localises to the mitochondrion. Its subcellular location is the membrane. It is found in the cell membrane. The protein resides in the perikaryon. The protein localises to the neuron projection. The enzyme catalyses a 1,2-diacyl-sn-glycero-3-phospho-(1D-myo-inositol) + ATP = a 1,2-diacyl-sn-glycero-3-phospho-(1D-myo-inositol 4-phosphate) + ADP + H(+). Membrane-bound phosphatidylinositol-4 kinase (PI4-kinase) that catalyzes the phosphorylation of phosphatidylinositol (PI) to phosphatidylinositol 4-phosphate (PI4P), a lipid that plays important roles in endocytosis, Golgi function, protein sorting and membrane trafficking and is required for prolonged survival of neurons. Besides, phosphorylation of phosphatidylinositol (PI) to phosphatidylinositol 4-phosphate (PI4P) is the first committed step in the generation of phosphatidylinositol 4,5-bisphosphate (PIP2), a precursor of the second messenger inositol 1,4,5-trisphosphate (InsP3). This Mus musculus (Mouse) protein is Phosphatidylinositol 4-kinase type 2-alpha (Pi4k2a).